The chain runs to 1014 residues: MICAL-like protein 2 (1014 aa).

Positions 1 to 107 constitute a Calponin-homology (CH) domain; sequence MAAIKALQEW…YVSQYYNYFH (107 aa). The segment at 1–261 is forms an intramolecular interaction with the C-terminal coiled coil domain keeping the protein in a closed conformation; sequence MAAIKALQEW…KLSNLASRQP (261 aa). Phosphoserine is present on residues S110, S144, and S154. A disordered region spans residues 114–181; that stretch reads GMAGMKRPSS…PSPKAAPGTV (68 aa). In terms of domain architecture, LIM zinc-binding spans 187 to 249; it reads SICGVCGKHV…THHSSEAVSV (63 aa). S250 carries the phosphoserine modification. Positions 262-394 are necessary and sufficient for interaction with actinins; it reads GGGIADTRPI…QGQAASKGVK (133 aa). Residues 262 to 810 form a mediates targeting to the cell plasma membrane region; sequence GGGIADTRPI…QDDQTRSCKE (549 aa). Disordered regions lie at residues 311-450 and 609-780; these read LTPP…SRVP and TLPK…RRKK. Over residues 332–355 the composition is skewed to polar residues; it reads STVTTTSANSKATTHVTNSSPVGW. Residues 356 to 368 are compositionally biased toward low complexity; it reads SSSAQSSTGTSGS. Over residues 384 to 398 the composition is skewed to polar residues; sequence PQGQAASKGVKTQLN. Composition is skewed to low complexity over residues 399–419 and 438–447; these read SSTD…SSRT and PASSSSSHAS. Polar residues-rich tracts occupy residues 624 to 633 and 646 to 656; these read LSHSTTQAFS and VGSTSWTSVSL. Composition is skewed to basic and acidic residues over residues 701-711 and 720-737; these read EGWRARLKPVD and LEQK…DTPR. Positions 747–758 are enriched in polar residues; it reads IHITLTPIQQKR. T759 bears the Phosphothreonine mark. Residues S773 and S837 each carry the phosphoserine modification. The forms an intramolecular interaction with the N-terminal Calponin-homology and LIM zinc-binding domains-containing region keeping the protein in a closed conformation stretch occupies residues 811-918; that stretch reads KTATWGTRES…LMYKSKDQCL (108 aa). The bMERB domain maps to 838–985; sequence PVRLHPNYIS…EQEEDQMLES (148 aa). The stretch at 845–885 forms a coiled coil; that stretch reads YISQEELQRQLQDIERQLDALELRGVELEKRLRAAEGDASE. The mediates interaction with RAB13 and is required for transition from the closed to the open conformation stretch occupies residues 918 to 1014; sequence LEERQLDLQG…WSSKSKSGQT (97 aa).

In terms of assembly, interacts with RAB13 (GTP-bound form); competes with RAB8A and is involved in tight junctions assembly. Interacts with RAB8A; competes with RAB13 and is involved in E-cadherin endocytic recycling. Interacts with RAB8B. Interacts (preferentially in opened conformation) with ACTN1 and ACTN4; stimulated by RAB13 activation. Interacts (via calponin-homology (CH) domain) with the filamins FLNA, FLNB and FLNC (via actin-binding domain).

Its subcellular location is the cell membrane. It localises to the cell junction. The protein localises to the tight junction. The protein resides in the recycling endosome. It is found in the cell projection. Its subcellular location is the neuron projection. It localises to the cytoplasm. The protein localises to the cytoskeleton. Its function is as follows. Effector of small Rab GTPases which is involved in junctional complexes assembly through the regulation of cell adhesion molecules transport to the plasma membrane and actin cytoskeleton reorganization. Regulates the endocytic recycling of occludins, claudins and E-cadherin to the plasma membrane and may thereby regulate the establishment of tight junctions and adherens junctions. In parallel, may regulate actin cytoskeleton reorganization directly through interaction with F-actin or indirectly through actinins and filamins. Most probably involved in the processes of epithelial cell differentiation, cell spreading and neurite outgrowth. Undergoes liquid-liquid phase separation to form tubular recycling endosomes. Plays 2 sequential roles in the biogenesis of tubular recycling endosomes: first organizes phase separation and then the closed form formed by interaction with RAB8A promotes endosomal tubulation. The polypeptide is MICAL-like protein 2 (Micall2) (Rattus norvegicus (Rat)).